The primary structure comprises 30 residues: GLAGAISSALDKLKQSQLIKNYAKKLGYPR.

Expressed by the skin dorsal glands.

It localises to the secreted. This Uperoleia inundata (Floodplain toadlet) protein is Uperin-6.1.